A 586-amino-acid chain; its full sequence is Arginine--tRNA ligase (586 aa).

Residues 133–143 (ANPTGPLNIVS) carry the 'HIGH' region motif.

It belongs to the class-I aminoacyl-tRNA synthetase family. As to quaternary structure, monomer.

Its subcellular location is the cytoplasm. It catalyses the reaction tRNA(Arg) + L-arginine + ATP = L-arginyl-tRNA(Arg) + AMP + diphosphate. This is Arginine--tRNA ligase from Leptospira interrogans serogroup Icterohaemorrhagiae serovar Lai (strain 56601).